The chain runs to 60 residues: MAVQQNKKSRSARDMRRSHDALSENALSVEKTTGEVHLRHHVSPEGVYRGRKVIDKGADE.

The disordered stretch occupies residues 1 to 44 (MAVQQNKKSRSARDMRRSHDALSENALSVEKTTGEVHLRHHVSP). Positions 11 to 22 (SARDMRRSHDAL) are enriched in basic and acidic residues.

Belongs to the bacterial ribosomal protein bL32 family.

This is Large ribosomal subunit protein bL32 from Pseudomonas putida (strain W619).